The primary structure comprises 424 residues: MTRPIGIDLFAGAGGLSLGFEQAGFDLVAAVDIDPIHCAAHKFNFPKCATVCKSVVDVTGDELRRIAGIGKRDIDIVIGGAPCQGFSLIGKRALDDSRNQLVHHYVRVVMELKPKYFVFENVKGLTVGKHRQFLKEVIEAFQNGGYDVVTDYRVLNAADYGVPQDRRRLILMGARKGLPLPAYPEPTGRTTVGDAIGDIPDAESFPELWERDWVKAKYGKPSTYAAYLRGKKDDPTDFGYRRQFDPMLLTGSLLTDHTELSRQRFAAIAPDDVEPVSRFKKLALNGICNTLRAGTASDRGAFTSPRPIHPTVPRVITVREAARLHSYPDWFRFHATKWHGFRQIGNSVPPLLARAVGGQIMKALRKKPEKPSEMLALGDQSLIGISMTDAAAMFGVSSTVIARRSRPVDRPAPRRHEERELVTA.

The SAM-dependent MTase C5-type domain maps to 4-367; it reads PIGIDLFAGA…GQIMKALRKK (364 aa). Cys83 is an active-site residue. A disordered region spans residues 404–424; that stretch reads RSRPVDRPAPRRHEERELVTA. Positions 406–424 are enriched in basic and acidic residues; it reads RPVDRPAPRRHEERELVTA.

It belongs to the class I-like SAM-binding methyltransferase superfamily. C5-methyltransferase family.

The catalysed reaction is a 2'-deoxycytidine in DNA + S-adenosyl-L-methionine = a 5-methyl-2'-deoxycytidine in DNA + S-adenosyl-L-homocysteine + H(+). Its function is as follows. A methylase that recognizes the double-stranded sequence 5'-CGATCG-3', methylates C-? on both strands and protects the DNA from cleavage by the XorII endonuclease. This Xanthomonas oryzae pv. oryzae (strain KACC10331 / KXO85) protein is Type II methyltransferase M.XorII (xorIIM).